The primary structure comprises 629 residues: uncharacterized protein (629 aa).

His562 (proton acceptor) is an active-site residue.

The protein belongs to the GMC oxidoreductase family. FAD serves as cofactor.

This is an uncharacterized protein from Mycobacterium tuberculosis (strain CDC 1551 / Oshkosh).